The primary structure comprises 149 residues: Secreted RxLR effector protein 17 (149 aa).

Positions 1–24 (MRLFYFSAMSVIGLLARNNMVVVA) are cleaved as a signal peptide. The RxLR-dEER signature appears at 52–78 (RSLRTREKDIQDSTVAKDDAIKVEEDR).

Belongs to the RxLR effector family.

It localises to the secreted. The protein resides in the host cytoplasm. The protein localises to the host nucleus. Functionally, effector that acts as a broad suppressor of cell death to interrupt plant immunity. Inhibits cell death induced by cell death-inducing proteins, including the PAMP elicitor INF1 from P.infestans. The polypeptide is Secreted RxLR effector protein 17 (Plasmopara viticola (Downy mildew of grapevine)).